A 108-amino-acid polypeptide reads, in one-letter code: ATP-dependent Clp protease adapter protein ClpS (108 aa).

This sequence belongs to the ClpS family. In terms of assembly, binds to the N-terminal domain of the chaperone ClpA.

Its function is as follows. Involved in the modulation of the specificity of the ClpAP-mediated ATP-dependent protein degradation. The chain is ATP-dependent Clp protease adapter protein ClpS from Mycobacterium leprae (strain TN).